Here is a 60-residue protein sequence, read N- to C-terminus: Large ribosomal subunit protein bL32 (60 aa).

Residues 1-16 (MAVPRRKTSPSRRGMR) show a composition bias toward basic residues. The disordered stretch occupies residues 1–60 (MAVPRRKTSPSRRGMRRSADAIKKPTYVEDKDSGELRRPHHLDLKTGMYKGRQVLKKKDA). Basic and acidic residues predominate over residues 17 to 44 (RSADAIKKPTYVEDKDSGELRRPHHLDL).

This sequence belongs to the bacterial ribosomal protein bL32 family.

The polypeptide is Large ribosomal subunit protein bL32 (Bradyrhizobium sp. (strain BTAi1 / ATCC BAA-1182)).